The primary structure comprises 648 residues: Acetyl-coenzyme A synthetase (648 aa).

CoA is bound by residues 191 to 194 (RGGR), threonine 310, and asparagine 334. ATP-binding positions include 386–388 (GEP), 410–415 (DTWWQT), aspartate 499, and arginine 514. Serine 522 contributes to the CoA binding site. Arginine 525 is an ATP binding site. Residues valine 536, histidine 538, and isoleucine 541 each coordinate Mg(2+). Residue arginine 583 participates in CoA binding. The residue at position 608 (lysine 608) is an N6-acetyllysine.

This sequence belongs to the ATP-dependent AMP-binding enzyme family. Requires Mg(2+) as cofactor. In terms of processing, acetylated. Deacetylation by the SIR2-homolog deacetylase activates the enzyme.

It carries out the reaction acetate + ATP + CoA = acetyl-CoA + AMP + diphosphate. Catalyzes the conversion of acetate into acetyl-CoA (AcCoA), an essential intermediate at the junction of anabolic and catabolic pathways. AcsA undergoes a two-step reaction. In the first half reaction, AcsA combines acetate with ATP to form acetyl-adenylate (AcAMP) intermediate. In the second half reaction, it can then transfer the acetyl group from AcAMP to the sulfhydryl group of CoA, forming the product AcCoA. The sequence is that of Acetyl-coenzyme A synthetase from Aeromonas salmonicida (strain A449).